Here is a 70-residue protein sequence, read N- to C-terminus: Large ribosomal subunit protein eL38 (70 aa).

It belongs to the eukaryotic ribosomal protein eL38 family.

This is Large ribosomal subunit protein eL38 (RpL38) from Aedes aegypti (Yellowfever mosquito).